Here is a 268-residue protein sequence, read N- to C-terminus: Ribosome maturation factor RimP (268 aa).

2 disordered regions span residues 1–41 (MGSA…GRGG) and 223–268 (LVEP…EMTR). A compositionally biased stretch (low complexity) spans 32 to 41 (PSGSARGRGG). Residues 248 to 257 (ESNDDGREAG) show a composition bias toward basic and acidic residues.

This sequence belongs to the RimP family.

It is found in the cytoplasm. Its function is as follows. Required for maturation of 30S ribosomal subunits. This is Ribosome maturation factor RimP from Frankia casuarinae (strain DSM 45818 / CECT 9043 / HFP020203 / CcI3).